A 141-amino-acid chain; its full sequence is VLSPADKTNVKAAWDKVGGHAGEYGAEALERMFLSFPTTKTYFPHFDLSHGSAQVKGHGKKVADALTLAVGHVDDMPHALSALSDLHAHKLRVDPVNFKLLSHCLLVTLAAHLPAEFTPAVHASLDKFLASVSTVLTSKYR.

A Globin domain is found at 1–141 (VLSPADKTNV…VSTVLTSKYR (141 aa)). S3 bears the Phosphoserine mark. K7 is modified (N6-succinyllysine). The residue at position 8 (T8) is a Phosphothreonine. Position 11 is an N6-succinyllysine (K11). K16 carries the post-translational modification N6-acetyllysine; alternate. An N6-succinyllysine; alternate modification is found at K16. At Y24 the chain carries Phosphotyrosine. Residue S35 is modified to Phosphoserine. K40 bears the N6-succinyllysine mark. At S49 the chain carries Phosphoserine. Position 58 (H58) interacts with O2. H87 provides a ligand contact to heme b. S102 is modified (phosphoserine). The residue at position 108 (T108) is a Phosphothreonine. Phosphoserine occurs at positions 124 and 131. Phosphothreonine occurs at positions 134 and 137. A Phosphoserine modification is found at S138.

Belongs to the globin family. In terms of assembly, heterotetramer of two alpha chains and two beta chains. As to expression, red blood cells.

Involved in oxygen transport from the lung to the various peripheral tissues. This chain is Hemoglobin subunit alpha-1/2, found in Macaca speciosa (Stump-tail macaque).